The sequence spans 135 residues: Large ribosomal subunit protein uL16c (135 aa).

This sequence belongs to the universal ribosomal protein uL16 family. As to quaternary structure, part of the 50S ribosomal subunit.

It localises to the plastid. Its subcellular location is the chloroplast. This is Large ribosomal subunit protein uL16c from Phaseolus vulgaris (Kidney bean).